Here is a 186-residue protein sequence, read N- to C-terminus: Methylamine dehydrogenase light chain (186 aa).

Residues 1–57 (MLGKSQFDDLFEKMSRKVAGHTSRRGFIGRVGTAVAGVALVPLLPVDRRGRVSRANA) constitute a signal peptide (tat-type signal). 6 disulfides stabilise this stretch: cysteine 78-cysteine 143, cysteine 84-cysteine 116, cysteine 91-cysteine 176, cysteine 93-cysteine 141, cysteine 101-cysteine 132, and cysteine 133-cysteine 164. Tryptophan 112 carries the tryptophylquinone modification. Positions 112-163 (WVASCYNPTDKQSYLISYRDCCGANVSGRCACLNTEGELPVYRPEFGNDIIW) form a cross-link, tryptophan tryptophylquinone (Trp-Trp).

Belongs to the aromatic amine dehydrogenase light chain family. As to quaternary structure, heterotetramer of two light and two heavy chains. The cofactor is tryptophan tryptophylquinone residue. Predicted to be exported by the Tat system. The position of the signal peptide cleavage has been experimentally proven. Post-translationally, tryptophan tryptophylquinone (TTQ) is formed by oxidation of the indole ring of a tryptophan to form tryptophylquinone followed by covalent cross-linking with another tryptophan residue.

It is found in the periplasm. The enzyme catalyses 2 oxidized [amicyanin] + methylamine + H2O = 2 reduced [amicyanin] + formaldehyde + NH4(+) + 2 H(+). It functions in the pathway one-carbon metabolism; methylamine degradation; formaldehyde from methylamine: step 1/1. Methylamine dehydrogenase carries out the oxidation of methylamine. Electrons are passed from methylamine dehydrogenase to amicyanin. This Methylorubrum extorquens (strain ATCC 14718 / DSM 1338 / JCM 2805 / NCIMB 9133 / AM1) (Methylobacterium extorquens) protein is Methylamine dehydrogenase light chain (mauA).